A 1028-amino-acid polypeptide reads, in one-letter code: Unconventional myosin-Ic-A (1028 aa).

At Met1 the chain carries N-acetylmethionine. A Myosin motor domain is found at 12–696 (GVQDFVLLEN…TLFATEDALE (685 aa)). 105-112 (GESGSGKT) contacts ATP. Position 348 is an N6-methyllysine (Lys348). The segment at 573 to 595 (LSKLMEILMSKEPSYVRCIKPND) is actin-binding. IQ domains lie at 699 to 728 (KQGIATFLQARWKGYVQRRNFLHMKHSAIN) and 722 to 751 (MKHSAINIQSWWRGNIGRKKAAKKRWAVDV). Positions 850–1024 (KDNYPQSVPR…NGHLSVVAPR (175 aa)) constitute a TH1 domain.

The protein belongs to the TRAFAC class myosin-kinesin ATPase superfamily. Myosin family. As to quaternary structure, interacts (via its IQ motifs) with calmodulin.

It localises to the cytoplasm. Its subcellular location is the cell membrane. The protein localises to the cell projection. The protein resides in the stereocilium membrane. Myosins are actin-based motor molecules with ATPase activity. Unconventional myosins serve in intracellular movements. Their highly divergent tails are presumed to bind to membranous compartments, which would be moved relative to actin filaments. Involved in egg activation by coupling dynamic actin to membrane. The chain is Unconventional myosin-Ic-A (myo1c-a) from Xenopus laevis (African clawed frog).